Here is a 268-residue protein sequence, read N- to C-terminus: uncharacterized protein (268 aa).

3 consecutive transmembrane segments (helical) span residues 169–189, 190–210, and 225–245; these read AIIY…QGFA, GVKT…LWLL, and IFAG…LSVF.

It localises to the cell membrane. This is an uncharacterized protein from Bacillus subtilis (strain 168).